The sequence spans 332 residues: Phenylalanine--tRNA ligase alpha subunit (332 aa).

A Mg(2+)-binding site is contributed by glutamate 254.

This sequence belongs to the class-II aminoacyl-tRNA synthetase family. Phe-tRNA synthetase alpha subunit type 1 subfamily. Tetramer of two alpha and two beta subunits. Mg(2+) serves as cofactor.

The protein resides in the cytoplasm. The enzyme catalyses tRNA(Phe) + L-phenylalanine + ATP = L-phenylalanyl-tRNA(Phe) + AMP + diphosphate + H(+). The chain is Phenylalanine--tRNA ligase alpha subunit from Hydrogenovibrio crunogenus (strain DSM 25203 / XCL-2) (Thiomicrospira crunogena).